The primary structure comprises 1151 residues: PPi-type phosphoenolpyruvate carboxykinase 1 (1151 aa).

Positions Arg-1083–Glu-1129 form a coiled coil.

This sequence belongs to the PPi-type phosphoenolpyruvate carboxykinase family. As to quaternary structure, monomer and trimer; forms heterotrimers with PEPCK2 and PEPCK3.

It is found in the cytoplasm. The protein localises to the cytosol. The enzyme catalyses oxaloacetate + diphosphate = phosphoenolpyruvate + phosphate + CO2. In terms of biological role, inorganic pyrophosphate (PPi)-dependent phosphoenolpyruvate carboxykinase, which regulates the carbon flow of the central metabolism by fixing CO(2) to phosphoenolpyruvate to produce oxaloacetate. Can also produce pyruvate and diphosphate from phosphoenolpyruvate and phosphate. The polypeptide is PPi-type phosphoenolpyruvate carboxykinase 1 (Entamoeba histolytica (strain ATCC 30459 / HM-1:IMSS / ABRM)).